Consider the following 680-residue polypeptide: Meiotic recombination protein REC8 (680 aa).

Low complexity-rich tracts occupy residues 278–290 and 436–446; these read ENDNENNSNGGED and SLVSTQSSSST. Disordered stretches follow at residues 278–297, 431–467, and 540–560; these read ENDNENNSNGGEDTSVENEG, RKRAHSLVSTQSSSSTRSHEYGRKSFRNNKNDNYSSD, and EQNFAEEDDSSNSCFSDGSQQ. The segment covering 550-560 has biased composition (polar residues); it reads SNSCFSDGSQQ.

This sequence belongs to the rad21 family. Proteolytically cleaved by ESP1. Post-translationally, phosphorylated by CDC5. CDC5 phosphorylation is necessary for cleavage by ESP1 and subsequent removal from chromosome arms.

The protein localises to the nucleus. It localises to the chromosome. It is found in the centromere. Its function is as follows. Replaces the SCC1 mitosis-specific cohesin to ensure sister chromatid cohesion during meiosis. Is cleaved by ESP1 shortly before the first meiotic division, and dissociates from chromatin, allowing sister chromatids to segregate. Is protected from cleavage by SPO13. Promotes localization of the LINC complex subunit MPS3 on nuclear envelope in mitotic cells. This Saccharomyces cerevisiae (strain ATCC 204508 / S288c) (Baker's yeast) protein is Meiotic recombination protein REC8.